A 434-amino-acid chain; its full sequence is UDP-N-acetylglucosamine 1-carboxyvinyltransferase (434 aa).

22–23 (KN) lines the phosphoenolpyruvate pocket. Arg-99 provides a ligand contact to UDP-N-acetyl-alpha-D-glucosamine. Cys-123 (proton donor) is an active-site residue. Cys-123 is subject to 2-(S-cysteinyl)pyruvic acid O-phosphothioketal. Residues 128–132 (RPVDQ), Asp-317, and Ile-339 each bind UDP-N-acetyl-alpha-D-glucosamine.

The protein belongs to the EPSP synthase family. MurA subfamily.

The protein resides in the cytoplasm. The enzyme catalyses phosphoenolpyruvate + UDP-N-acetyl-alpha-D-glucosamine = UDP-N-acetyl-3-O-(1-carboxyvinyl)-alpha-D-glucosamine + phosphate. The protein operates within cell wall biogenesis; peptidoglycan biosynthesis. Its function is as follows. Cell wall formation. Adds enolpyruvyl to UDP-N-acetylglucosamine. This is UDP-N-acetylglucosamine 1-carboxyvinyltransferase from Paracidovorax citrulli (strain AAC00-1) (Acidovorax citrulli).